The following is a 222-amino-acid chain: Endonuclease V (222 aa).

Positions 43 and 109 each coordinate Mg(2+).

Belongs to the endonuclease V family. Mg(2+) is required as a cofactor.

The protein localises to the cytoplasm. The enzyme catalyses Endonucleolytic cleavage at apurinic or apyrimidinic sites to products with a 5'-phosphate.. Its function is as follows. DNA repair enzyme involved in the repair of deaminated bases. Selectively cleaves double-stranded DNA at the second phosphodiester bond 3' to a deoxyinosine leaving behind the intact lesion on the nicked DNA. This Roseiflexus castenholzii (strain DSM 13941 / HLO8) protein is Endonuclease V.